The sequence spans 384 residues: MTKPIITFNNVSKTFEDSGTQVLKNINFDLEEGKFYTLLGASGSGKSTILNIMAGLLDASSGDIYLDGERINDLPINKRDIHTVFQNYALFPHMTVFENVAFALKLKKVDKKEIAKRVKETLKMVQLEGYENRSIQKLSGGQRQRVAIARAIINQPRVVLLDEPLSALDLKLRTEMQYELRELQQRLGITFVFVTHDQEEALAMSDWVFVMNEGEIVQSGTPVDIYDEPINHFVANFIGESNIINGTMIEDYLVSFNGKEFESVDGGMRPNEPVEVVIRPEDLQITLPEEGKLQVKVDTQLFRGVHYEIIAYDELGNEWMIHSTRKAIEGEVIGLDFTPEDLHIMRLNETEEEFDARIEEYVEMDEPEDGLINAIEEERNEENL.

Residues 6-238 (ITFNNVSKTF…PINHFVANFI (233 aa)) form the ABC transporter domain. 40 to 47 (GASGSGKS) lines the ATP pocket.

It belongs to the ABC transporter superfamily. Spermidine/putrescine importer (TC 3.A.1.11.1) family. In terms of assembly, the complex is composed of two ATP-binding proteins (PotA), two transmembrane proteins (PotB and PotC) and a solute-binding protein (PotD).

It localises to the cell membrane. It carries out the reaction ATP + H2O + polyamine-[polyamine-binding protein]Side 1 = ADP + phosphate + polyamineSide 2 + [polyamine-binding protein]Side 1.. In terms of biological role, part of the ABC transporter complex PotABCD involved in spermidine/putrescine import. Responsible for energy coupling to the transport system. The polypeptide is Spermidine/putrescine import ATP-binding protein PotA (Streptococcus pyogenes serotype M28 (strain MGAS6180)).